The primary structure comprises 210 residues: Urease accessory protein UreF (210 aa).

It belongs to the UreF family. In terms of assembly, ureD, UreF and UreG form a complex that acts as a GTP-hydrolysis-dependent molecular chaperone, activating the urease apoprotein by helping to assemble the nickel containing metallocenter of UreC. The UreE protein probably delivers the nickel.

The protein resides in the cytoplasm. Its function is as follows. Required for maturation of urease via the functional incorporation of the urease nickel metallocenter. This is Urease accessory protein UreF from Cereibacter sphaeroides (strain KD131 / KCTC 12085) (Rhodobacter sphaeroides).